A 488-amino-acid chain; its full sequence is Palmitoyltransferase ZDHHC14 (488 aa).

At 1–60 the chain is on the cytoplasmic side; that stretch reads MPPGGGGPMKDCEYSQISTHSSSPMESPHKKKKIAARRKWEVFPGRNKFFCNGRIMMARQ. The helical transmembrane segment at 61-81 threads the bilayer; it reads TGVFYLTLVLILVTSGLFFAF. The Lumenal portion of the chain corresponds to 82 to 89; the sequence is DCPYLAVK. A helical membrane pass occupies residues 90 to 110; sequence ITPAIPAVAGILFFFVMGTLL. Topologically, residues 111 to 208 are cytoplasmic; the sequence is RTSFSDPGVL…GNCVGKRNYR (98 aa). Positions 165-215 constitute a DHHC domain; sequence KYCFTCKIFRPPRASHCSLCDNCVERFDHHCPWVGNCVGKRNYRFFYMFIL. Cysteine 195 (S-palmitoyl cysteine intermediate) is an active-site residue. Residues 209–229 form a helical membrane-spanning segment; sequence FFYMFILSLSFLTVFIFAFVI. At 230 to 255 the chain is on the lumenal side; sequence THVILRSQQTGFLNALKDSPASVLEA. Residues 256 to 276 traverse the membrane as a helical segment; sequence VVCFFSVWSIVGLSGFHTYLI. Over 277-488 the chain is Cytoplasmic; sequence SSNQTTNEDI…VRGLVKLSSV (212 aa). Residue serine 455 is modified to Phosphoserine.

It belongs to the DHHC palmitoyltransferase family. ERF2/ZDHHC9 subfamily. In terms of tissue distribution, widely expressed.

It localises to the endoplasmic reticulum membrane. It is found in the golgi apparatus. The protein localises to the golgi stack membrane. It carries out the reaction L-cysteinyl-[protein] + hexadecanoyl-CoA = S-hexadecanoyl-L-cysteinyl-[protein] + CoA. Functionally, palmitoyltransferase that could catalyze the addition of palmitate onto various protein substrates. May have a palmitoyltransferase activity toward the beta-2 adrenergic receptor/ADRB2 and thereby regulate G protein-coupled receptor signaling. May play a role in cell differentiation and apoptosis. The polypeptide is Palmitoyltransferase ZDHHC14 (Homo sapiens (Human)).